The following is a 181-amino-acid chain: Oligoribonuclease (181 aa).

Residues 8–171 form the Exonuclease domain; that stretch reads LIWIDLEMTG…DDIRESIAEL (164 aa). Tyr-129 is an active-site residue.

Belongs to the oligoribonuclease family.

It localises to the cytoplasm. 3'-to-5' exoribonuclease specific for small oligoribonucleotides. The sequence is that of Oligoribonuclease from Vibrio cholerae serotype O1 (strain ATCC 39541 / Classical Ogawa 395 / O395).